The chain runs to 395 residues: Extracellular cysteine protease (395 aa).

The first 30 residues, 1 to 30 (MKKKLSYMITIMLAFTLSLALGLFFNSAHA), serve as a signal peptide directing secretion. Residues 31–221 (DSLPQKNGAN…TLEYQSTRNE (191 aa)) constitute a propeptide that is removed on maturation. Active-site residues include Cys245, His341, and Asn362.

This sequence belongs to the peptidase C47 family. Proteolytically cleaved.

It is found in the secreted. The protein resides in the cell wall. In terms of biological role, cysteine protease able to cleave elastin, insulin, myoglobin, fibronectin, fibrinogen, HMW-kininogen, alpha-1-protease inhibitor and alpha-1-antitrypsin. Along with other extracellular proteases may contribute to the colonization and infection of human tissues. The polypeptide is Extracellular cysteine protease (ecpA) (Staphylococcus epidermidis (strain ATCC 35984 / DSM 28319 / BCRC 17069 / CCUG 31568 / BM 3577 / RP62A)).